The following is a 295-amino-acid chain: MMLMDTSLIGAINLTIHAFLVGSLLLGLHRKIMARIQGRPGPPIIQYLLHTLKFYVKEITFPITAGNPLYIFVALLDIAIWLAALIIAIDFKSSLLIIIGIYVLQKIVEHGCGLSSGSPYGKIGGVRSVFSAAAEVPLFAVVAAIYLTTHSVLISDILSYQEIHGSLLFKMPICAFAFFILLVSKAPNSPFGIVKGKDIVSGYMTEHYGLLGAIIYIAEAIAYFVLLWLFIAVFIGPLVINSPVLTLAVMVVMTVILAFVNGLTPLLAPHHSVMLQMTIAGLVLCDVLYRLIVGG.

Helical transmembrane passes span 8–28 (LIGAINLTIHAFLVGSLLLGL), 69–89 (LYIFVALLDIAIWLAALIIAI), 129–149 (VFSAAAEVPLFAVVAAIYLTT), 163–183 (IHGSLLFKMPICAFAFFILLV), 199–219 (IVSGYMTEHYGLLGAIIYIAE), 220–240 (AIAYFVLLWLFIAVFIGPLVI), 243–263 (PVLTLAVMVVMTVILAFVNGL), and 273–293 (VMLQMTIAGLVLCDVLYRLIV).

The protein belongs to the complex I subunit 1 family.

Its subcellular location is the cell membrane. The catalysed reaction is a ubiquinone + NADH + 5 H(+)(in) = a ubiquinol + NAD(+) + 4 H(+)(out). The protein is Putative NADH-ubiquinone oxidoreductase MJ0520 of Methanocaldococcus jannaschii (strain ATCC 43067 / DSM 2661 / JAL-1 / JCM 10045 / NBRC 100440) (Methanococcus jannaschii).